The chain runs to 658 residues: Probable replication factor A 73 kDa subunit (658 aa).

Disordered stretches follow at residues 134 to 155 and 169 to 222; these read PEVKPRSHSGNPAEHHGYRPNI and SEFQ…TERG. The segment at residues 236-326 is a DNA-binding region (OB); sequence FRIHGMVSRK…TLRNDSVVEA (91 aa). The C4-type zinc finger occupies 518 to 539; the sequence is CASEGCQKKVIESDGEYRCEKC.

It belongs to the replication factor A protein 1 family. As to quaternary structure, component of the heterotrimeric canonical replication protein A complex (RPA).

It localises to the nucleus. Its function is as follows. As part of the heterotrimeric replication protein A complex (RPA/RP-A), binds and stabilizes single-stranded DNA intermediates, that form during DNA replication or upon DNA stress. It prevents their reannealing and in parallel, recruits and activates different proteins and complexes involved in DNA metabolism. Thereby, it plays an essential role both in DNA replication and the cellular response to DNA damage. In Caenorhabditis briggsae, this protein is Probable replication factor A 73 kDa subunit.